The following is a 162-amino-acid chain: N5-carboxyaminoimidazole ribonucleotide mutase (162 aa).

3 residues coordinate substrate: Ser11, Asp14, and Arg41.

It belongs to the AIR carboxylase family. Class I subfamily.

It carries out the reaction 5-carboxyamino-1-(5-phospho-D-ribosyl)imidazole + H(+) = 5-amino-1-(5-phospho-D-ribosyl)imidazole-4-carboxylate. The protein operates within purine metabolism; IMP biosynthesis via de novo pathway; 5-amino-1-(5-phospho-D-ribosyl)imidazole-4-carboxylate from 5-amino-1-(5-phospho-D-ribosyl)imidazole (N5-CAIR route): step 2/2. Catalyzes the conversion of N5-carboxyaminoimidazole ribonucleotide (N5-CAIR) to 4-carboxy-5-aminoimidazole ribonucleotide (CAIR). This chain is N5-carboxyaminoimidazole ribonucleotide mutase, found in Bacillus subtilis (strain 168).